Reading from the N-terminus, the 274-residue chain is 4-diphosphocytidyl-2-C-methyl-D-erythritol kinase (274 aa).

Residue Lys-10 is part of the active site. Residue 101-111 (PTQAGLGGGSA) coordinates ATP. Asp-143 is an active-site residue.

It belongs to the GHMP kinase family. IspE subfamily.

It carries out the reaction 4-CDP-2-C-methyl-D-erythritol + ATP = 4-CDP-2-C-methyl-D-erythritol 2-phosphate + ADP + H(+). The protein operates within isoprenoid biosynthesis; isopentenyl diphosphate biosynthesis via DXP pathway; isopentenyl diphosphate from 1-deoxy-D-xylulose 5-phosphate: step 3/6. In terms of biological role, catalyzes the phosphorylation of the position 2 hydroxy group of 4-diphosphocytidyl-2C-methyl-D-erythritol. The chain is 4-diphosphocytidyl-2-C-methyl-D-erythritol kinase from Helicobacter pylori (strain J99 / ATCC 700824) (Campylobacter pylori J99).